Here is a 328-residue protein sequence, read N- to C-terminus: L-lactate dehydrogenase (328 aa).

Residues Val18, Glu39, Lys46, Tyr71, and 85 to 86 (GA) contribute to the NAD(+) site. Substrate contacts are provided by Gln88 and Arg94. NAD(+) is bound by residues Ser107, 124 to 126 (AAN), and Ser149. Residue 126 to 129 (NPVD) coordinates substrate. Position 154 to 157 (154 to 157 (DSAR)) interacts with substrate. Positions 159 and 174 each coordinate beta-D-fructose 1,6-bisphosphate. His181 functions as the Proton acceptor in the catalytic mechanism. Phosphotyrosine is present on Tyr226. Residue Thr235 participates in substrate binding.

The protein belongs to the LDH/MDH superfamily. LDH family. As to quaternary structure, homotetramer.

The protein localises to the cytoplasm. The catalysed reaction is (S)-lactate + NAD(+) = pyruvate + NADH + H(+). Its pathway is fermentation; pyruvate fermentation to lactate; (S)-lactate from pyruvate: step 1/1. Allosterically activated by fructose 1,6-bisphosphate (FBP). Catalyzes the conversion of lactate to pyruvate. This Streptococcus pneumoniae (strain ATCC BAA-255 / R6) protein is L-lactate dehydrogenase.